We begin with the raw amino-acid sequence, 677 residues long: Protein hook (677 aa).

Residues 6-123 (NEMYYSLLEW…RLLQLVLGCA (118 aa)) enclose the Calponin-homology (CH) domain. Coiled-coil stretches lie at residues 135–436 (EIMC…KCGH) and 478–588 (QTAL…AKEV).

This sequence belongs to the hook family. As to quaternary structure, homodimer. Interacts with microtubules via its N-terminus.

The protein localises to the cytoplasm. It localises to the cytoskeleton. It is found in the endosome. The protein resides in the synapse. In terms of biological role, involved in endocytic trafficking by stabilizing organelles of the endocytic pathway. Probably acts as a cytoskeletal linker protein required to tether endosome vesicles to the cytoskeleton. Involved in modulation of endocytosis at stages required for down-regulation of membrane proteins that control synapse size. Not involved in synaptic vesicle recycling. Required in R7 cells for boss endocytosis into multivesicular bodies (MVBs). Has a role in regulating adult longevity. The polypeptide is Protein hook (Drosophila persimilis (Fruit fly)).